The primary structure comprises 498 residues: Cysteine--tRNA ligase (498 aa).

Cys-44 contacts Zn(2+). The 'HIGH' region motif lies at 46–56 (PTVYSDAHLGH). Zn(2+)-binding residues include Cys-235, His-260, and Glu-264. The 'KMSKS' region signature appears at 291 to 295 (KMSKS). Lys-294 is an ATP binding site.

It belongs to the class-I aminoacyl-tRNA synthetase family. In terms of assembly, monomer. It depends on Zn(2+) as a cofactor.

Its subcellular location is the cytoplasm. It carries out the reaction tRNA(Cys) + L-cysteine + ATP = L-cysteinyl-tRNA(Cys) + AMP + diphosphate. The protein is Cysteine--tRNA ligase (cysS) of Deinococcus radiodurans (strain ATCC 13939 / DSM 20539 / JCM 16871 / CCUG 27074 / LMG 4051 / NBRC 15346 / NCIMB 9279 / VKM B-1422 / R1).